A 120-amino-acid polypeptide reads, in one-letter code: Large ribosomal subunit protein uL18 (120 aa).

Belongs to the universal ribosomal protein uL18 family. Part of the 50S ribosomal subunit; part of the 5S rRNA/L5/L18/L25 subcomplex. Contacts the 5S and 23S rRNAs.

Functionally, this is one of the proteins that bind and probably mediate the attachment of the 5S RNA into the large ribosomal subunit, where it forms part of the central protuberance. This chain is Large ribosomal subunit protein uL18, found in Ehrlichia ruminantium (strain Gardel).